Consider the following 485-residue polypeptide: Tektin-5 (485 aa).

4 coiled-coil regions span residues 114–185, 225–247, 307–385, and 421–444; these read RLTD…EVNC, QEQM…DAQH, QNMR…MAKE, and TIDD…QLLV.

It belongs to the tektin family. Microtubule inner protein component of sperm flagellar doublet microtubules. Interacts with TEKT3. Ubiquitinated, leading to its degradation. Deubiquitinated by USP16, promoting its stability.

The protein localises to the cytoplasm. It is found in the cytoskeleton. It localises to the flagellum axoneme. Sperm-specific microtubule inner protein (MIP) part of the dynein-decorated doublet microtubules (DMTs) in flagellar axoneme. Forms an extensive interaction network in different conformations that reinforces the helix bundle composed by other tektin proteins (TEKT1 to TEKT4) and MIPs to anchor the tektin bundle onto the tubulin wall of A-tubule of the sperm flagellum. In Homo sapiens (Human), this protein is Tektin-5 (TEKT5).